The following is a 277-amino-acid chain: Diaminopimelate epimerase (277 aa).

Substrate contacts are provided by Asn-11 and Asn-62. Residue Cys-71 is the Proton donor of the active site. Substrate is bound by residues 72-73 (GN), Asn-160, Asn-193, and 211-212 (ER). The active-site Proton acceptor is Cys-220. Position 221-222 (221-222 (GT)) interacts with substrate.

It belongs to the diaminopimelate epimerase family. Homodimer.

The protein resides in the cytoplasm. The enzyme catalyses (2S,6S)-2,6-diaminopimelate = meso-2,6-diaminopimelate. The protein operates within amino-acid biosynthesis; L-lysine biosynthesis via DAP pathway; DL-2,6-diaminopimelate from LL-2,6-diaminopimelate: step 1/1. Its function is as follows. Catalyzes the stereoinversion of LL-2,6-diaminopimelate (L,L-DAP) to meso-diaminopimelate (meso-DAP), a precursor of L-lysine. This Methanococcus maripaludis (strain DSM 14266 / JCM 13030 / NBRC 101832 / S2 / LL) protein is Diaminopimelate epimerase.